The sequence spans 92 residues: UPF0223 protein SUB0967 (92 aa).

This sequence belongs to the UPF0223 family.

The sequence is that of UPF0223 protein SUB0967 from Streptococcus uberis (strain ATCC BAA-854 / 0140J).